Reading from the N-terminus, the 691-residue chain is Hormonally up-regulated neu tumor-associated kinase homolog A (691 aa).

A Protein kinase domain is found at 55–313; it reads YLIGRKLGEG…IQQALANRWL (259 aa). Residues 61–69 and Lys-84 contribute to the ATP site; that span reads LGEGSFAKV. The active-site Proton acceptor is Asp-179. The segment covering 406 to 425 has biased composition (basic and acidic residues); it reads MNKNSYEERRSKDLEKRGEP. Disordered regions lie at residues 406–475, 499–518, 580–640, and 655–679; these read MNKN…GGLS, QSPDPRTPKIMRRQDSHSQE, FQFD…SRGR, and QVVSPKGEKPLETRMPPLHQMSPGY. Over residues 440–453 the composition is skewed to polar residues; sequence SHRQNACLTPQGHS. Residues 457–470 are compositionally biased toward basic and acidic residues; sequence PVKERRSSKSERES. The segment covering 582–597 has biased composition (polar residues); sequence FDNTSPSKSHFNQASF. A compositionally biased stretch (low complexity) spans 604–620; that stretch reads SPSSPESMSPTSPHSPS. Residues 621–631 are compositionally biased toward polar residues; that stretch reads CNNNISGNLGS.

The protein belongs to the protein kinase superfamily. CAMK Ser/Thr protein kinase family. SNF1 subfamily.

The enzyme catalyses L-seryl-[protein] + ATP = O-phospho-L-seryl-[protein] + ADP + H(+). The catalysed reaction is L-threonyl-[protein] + ATP = O-phospho-L-threonyl-[protein] + ADP + H(+). This Xenopus laevis (African clawed frog) protein is Hormonally up-regulated neu tumor-associated kinase homolog A (hunk-a).